A 218-amino-acid chain; its full sequence is Akirin (218 aa).

Residues 96 to 150 (KAIPRSNDFDDDGDQRGDGCSSNYSKAYRAPSSPKSGSDSEGEAPSTSVTDRSSA) form a disordered region. The segment covering 128-147 (SPKSGSDSEGEAPSTSVTDR) has biased composition (polar residues).

The protein belongs to the akirin family. As to quaternary structure, interacts with hda-1, a component of the NuRD complex. Interacts with let-418, a component of the NuRD and MEC complexes. Interacts with the transcription factor ceh-18. Interacts with ima-2. In terms of tissue distribution, localizes to somatic tissues throughout the body, including muscle cells. Expressed in lateral epithelial seam cells, the hyp7 epidermal syncytium, and multiple head and tail neurons.

The protein resides in the nucleus. In terms of biological role, molecular adapter that acts as a bridge between a variety of multiprotein complexes, and which is involved in antifungal innate immunity, development of the muscle and sister chromatid cohesion. Plays a role in antifungal innate immunity by acting as a bridge between components of the NuRD (Nucleosome Remodeling and Deacetylase) and MEC chromatin remodeling complexes. NuRD and MEC complexes bind to the promoters of antimicrobial peptide genes and may recruit other proteins such as ceh-18 to control gene expression in response to fungal infection. During meiotic prophase I, plays a role in the disassembly of synaptonemal complex proteins and in the regulation of chromosome condensation and segregation. Together with nuclear import receptor ima-2, required for the import and load of cohesin complex proteins in meiotic nuclei, possibly by acting as a bridge between ima-2 and cohesins. Required for embryonic development of muscle tissue. The chain is Akirin from Caenorhabditis elegans.